Consider the following 309-residue polypeptide: MAADEDELNLLVIIVDTNPIWWGKQALKESQFTLSKCMDAVMVLANSHLFMNRSNQLAVIASHIQESRLLYPGKNGGLGDFFGDPGNALPDCNPSGSKDGKYELLTVANEVIAEEIKDLMTKSDIKGQHTETLLAGSLAKALCYIHRVNKAVKDNQEMKSRILVIKAAEDSALQYMNFMNVIFAAQKQNILIDACVLDSDSGLLQQACDITGGLYLKVPQMPSLLQYLLWVFLPDQDQRSQLILPPPIHVDYRAACFCHRSLIEIGYVCSVCLSIFCNFSPICTTCETAFKISLPPVLKAKKKKQKVSL.

The C4-type zinc finger occupies 269–286; that stretch reads CSVCLSIFCNFSPICTTC.

It belongs to the TFB4 family. Part of a TFIID-containing RNA polymerase II pre-initiation complex that is composed of TBP and at least GTF2A1, GTF2A2, GTF2E1, GTF2E2, GTF2F1, GTF2H2, GTF2H3, GTF2H4, GTF2H5, GTF2B, TCEA1, ERCC2, ERCC3, TAF1, TAF2, TAF3, TAF4, TAF5, TAF6, TAF7, TAF8, TAF9, TAF10, TAF11, TAF12 and TAF13. Component of the 7-subunit TFIIH core complex composed of XPB/ERCC3, XPD/ERCC2, GTF2H1, GTF2H2, GTF2H3, GTF2H4 and GTF2H5, which is active in NER. The core complex associates with the 3-subunit CDK-activating kinase (CAK) module composed of CCNH/cyclin H, CDK7 and MNAT1 to form the 10-subunit holoenzyme (holo-TFIIH) active in transcription. Interacts with RARA; the interaction requires prior phosphorylation of RARA on 'Ser-369' which then enhances interaction of RARA with CDK7.

Its subcellular location is the nucleus. Its function is as follows. Component of the general transcription and DNA repair factor IIH (TFIIH) core complex, which is involved in general and transcription-coupled nucleotide excision repair (NER) of damaged DNA and, when complexed to CAK, in RNA transcription by RNA polymerase II. In NER, TFIIH acts by opening DNA around the lesion to allow the excision of the damaged oligonucleotide and its replacement by a new DNA fragment. In transcription, TFIIH has an essential role in transcription initiation. When the pre-initiation complex (PIC) has been established, TFIIH is required for promoter opening and promoter escape. Phosphorylation of the C-terminal tail (CTD) of the largest subunit of RNA polymerase II by the kinase module CAK controls the initiation of transcription. The sequence is that of General transcription factor IIH subunit 3 (Gtf2h3) from Mus musculus (Mouse).